A 302-amino-acid chain; its full sequence is Glycine--tRNA ligase alpha subunit (302 aa).

The protein belongs to the class-II aminoacyl-tRNA synthetase family. As to quaternary structure, tetramer of two alpha and two beta subunits.

It localises to the cytoplasm. The enzyme catalyses tRNA(Gly) + glycine + ATP = glycyl-tRNA(Gly) + AMP + diphosphate. This is Glycine--tRNA ligase alpha subunit from Xanthomonas campestris pv. campestris (strain 8004).